We begin with the raw amino-acid sequence, 283 residues long: Prepilin leader peptidase/N-methyltransferase (283 aa).

The next 7 membrane-spanning stretches (helical) occupy residues 13–33 (VWLL…NVVI), 106–126 (WRYP…GLLW), 128–148 (PGLA…LAAI), 153–173 (QLLP…FNLA), 176–196 (FVPL…LWLI), 216–236 (LLAA…VLIA), and 259–279 (LAFG…NVLG).

This sequence belongs to the peptidase A24 family.

The protein resides in the cell inner membrane. The catalysed reaction is Typically cleaves a -Gly-|-Phe- bond to release an N-terminal, basic peptide of 5-8 residues from type IV prepilin, and then N-methylates the new N-terminal amino group, the methyl donor being S-adenosyl-L-methionine.. Plays a role in type II pseudopili formation by proteolytically removing the leader sequence from substrate proteins and subsequently monomethylating the alpha-amino group of the newly exposed N-terminal phenylalanine. Substrates include proteins required for biogenesis of the type II general secretory apparatus. The sequence is that of Prepilin leader peptidase/N-methyltransferase (outO) from Dickeya chrysanthemi (Pectobacterium chrysanthemi).